The following is a 379-amino-acid chain: S-adenosylmethionine:tRNA ribosyltransferase-isomerase (379 aa).

The tract at residues Ala-35 to Ser-58 is disordered.

This sequence belongs to the QueA family. Monomer.

The protein resides in the cytoplasm. It catalyses the reaction 7-aminomethyl-7-carbaguanosine(34) in tRNA + S-adenosyl-L-methionine = epoxyqueuosine(34) in tRNA + adenine + L-methionine + 2 H(+). It participates in tRNA modification; tRNA-queuosine biosynthesis. In terms of biological role, transfers and isomerizes the ribose moiety from AdoMet to the 7-aminomethyl group of 7-deazaguanine (preQ1-tRNA) to give epoxyqueuosine (oQ-tRNA). This is S-adenosylmethionine:tRNA ribosyltransferase-isomerase from Rhizobium leguminosarum bv. trifolii (strain WSM2304).